The chain runs to 773 residues: Phenylalanine--tRNA ligase beta subunit (773 aa).

Positions 39 to 150 constitute a tRNA-binding domain; it reads LKAPDKVVVG…GKLELGRPLN (112 aa). Residues 391–467 form the B5 domain; the sequence is KELPIIPISI…RIIGIDNIAS (77 aa). Aspartate 445, aspartate 451, glutamate 454, and glutamate 455 together coordinate Mg(2+). Positions 682–773 constitute an FDX-ACB domain; sequence SKFPAITRDL…TLKNLGLDLR (92 aa).

This sequence belongs to the phenylalanyl-tRNA synthetase beta subunit family. Type 1 subfamily. Tetramer of two alpha and two beta subunits. The cofactor is Mg(2+).

The protein localises to the cytoplasm. It catalyses the reaction tRNA(Phe) + L-phenylalanine + ATP = L-phenylalanyl-tRNA(Phe) + AMP + diphosphate + H(+). The sequence is that of Phenylalanine--tRNA ligase beta subunit (pheT) from Campylobacter jejuni subsp. jejuni serotype O:2 (strain ATCC 700819 / NCTC 11168).